We begin with the raw amino-acid sequence, 306 residues long: CRISPR-associated endonuclease Cas1 (306 aa).

Residues E143, H210, and D223 each coordinate Mn(2+).

This sequence belongs to the CRISPR-associated endonuclease Cas1 family. As to quaternary structure, homodimer, forms a heterotetramer with a Cas2 homodimer. It depends on Mg(2+) as a cofactor. The cofactor is Mn(2+).

Its function is as follows. CRISPR (clustered regularly interspaced short palindromic repeat), is an adaptive immune system that provides protection against mobile genetic elements (viruses, transposable elements and conjugative plasmids). CRISPR clusters contain spacers, sequences complementary to antecedent mobile elements, and target invading nucleic acids. CRISPR clusters are transcribed and processed into CRISPR RNA (crRNA). Acts as a dsDNA endonuclease. Involved in the integration of spacer DNA into the CRISPR cassette. This chain is CRISPR-associated endonuclease Cas1, found in Geobacter sulfurreducens (strain ATCC 51573 / DSM 12127 / PCA).